A 675-amino-acid chain; its full sequence is Potassium-transporting ATPase ATP-binding subunit 2 (675 aa).

4 helical membrane passes run 34-54 (IMFV…FPDI), 65-85 (LITI…SEAF), 216-236 (IALF…IVTL), and 245-265 (LILP…TTIG). Catalysis depends on aspartate 304, which acts as the 4-aspartylphosphate intermediate. ATP is bound by residues aspartate 341, glutamate 345, 372 to 379 (FTAETRMS), and lysine 390. Mg(2+) contacts are provided by aspartate 513 and aspartate 517. Transmembrane regions (helical) follow at residues 569–591 (ALTT…ALMM), 611–631 (AIIS…PIAM), and 644–664 (IFIN…FLGI).

This sequence belongs to the cation transport ATPase (P-type) (TC 3.A.3) family. Type IA subfamily. The system is composed of three essential subunits: KdpA, KdpB and KdpC.

Its subcellular location is the cell membrane. It catalyses the reaction K(+)(out) + ATP + H2O = K(+)(in) + ADP + phosphate + H(+). Its function is as follows. Part of the high-affinity ATP-driven potassium transport (or Kdp) system, which catalyzes the hydrolysis of ATP coupled with the electrogenic transport of potassium into the cytoplasm. This subunit is responsible for energy coupling to the transport system and for the release of the potassium ions to the cytoplasm. The chain is Potassium-transporting ATPase ATP-binding subunit 2 from Staphylococcus aureus (strain MRSA252).